The primary structure comprises 373 residues: uncharacterized protein (373 aa).

The region spanning 14 to 168 (KKIVNKIIDE…LMDTPGVLEM (155 aa)) is the CP-type G domain. GTP is bound at residue 117 to 124 (GYPNVGKS).

The protein belongs to the TRAFAC class YlqF/YawG GTPase family.

This is an uncharacterized protein from Methanocaldococcus jannaschii (strain ATCC 43067 / DSM 2661 / JAL-1 / JCM 10045 / NBRC 100440) (Methanococcus jannaschii).